We begin with the raw amino-acid sequence, 160 residues long: Transcription antitermination protein NusB (160 aa).

Belongs to the NusB family.

In terms of biological role, involved in transcription antitermination. Required for transcription of ribosomal RNA (rRNA) genes. Binds specifically to the boxA antiterminator sequence of the ribosomal RNA (rrn) operons. This is Transcription antitermination protein NusB from Sinorhizobium fredii (strain NBRC 101917 / NGR234).